We begin with the raw amino-acid sequence, 392 residues long: Stilbene synthase 3 (392 aa).

Residue 55-58 (KFNR) coordinates substrate. Residue C164 is part of the active site. Substrate-binding positions include L267 and 305–307 (GGP).

The protein belongs to the thiolase-like superfamily. Chalcone/stilbene synthases family. In terms of assembly, homodimer.

The protein resides in the cytoplasm. The catalysed reaction is 4-coumaroyl-CoA + 3 malonyl-CoA + 3 H(+) = trans-resveratrol + 4 CO2 + 4 CoA. Its pathway is phytoalexin biosynthesis; 3,4',5-trihydroxystilbene biosynthesis; 3,4',5-trihydroxystilbene from trans-4-coumarate: step 2/2. Mediates resistance to pathogens which are sensitive to stilbenes. The sequence is that of Stilbene synthase 3 from Vitis vinifera (Grape).